The chain runs to 155 residues: Ribonuclease H (155 aa).

Residues 5-146 form the RNase H type-1 domain; it reads LAEVVEIFTD…ADMLANRGVQ (142 aa). Residues Asp-14, Glu-52, Asp-74, and Asp-138 each coordinate Mg(2+).

It belongs to the RNase H family. Monomer. It depends on Mg(2+) as a cofactor.

It is found in the cytoplasm. The enzyme catalyses Endonucleolytic cleavage to 5'-phosphomonoester.. Endonuclease that specifically degrades the RNA of RNA-DNA hybrids. This Nitrosospira multiformis (strain ATCC 25196 / NCIMB 11849 / C 71) protein is Ribonuclease H.